A 955-amino-acid polypeptide reads, in one-letter code: Protein translocase subunit SecA (955 aa).

Residues glutamine 90, 108–112 (GEGKT), and aspartate 509 contribute to the ATP site. Residues 537–571 (EGHRPPVPLQRSGAEGGGGFAAKAAPASGPHGHAP) are disordered. Residues 557–571 (AAKAAPASGPHGHAP) are compositionally biased toward low complexity.

Belongs to the SecA family. In terms of assembly, monomer and homodimer. Part of the essential Sec protein translocation apparatus which comprises SecA, SecYEG and auxiliary proteins SecDF. Other proteins may also be involved.

It localises to the cell inner membrane. The protein localises to the cellular thylakoid membrane. Its subcellular location is the cytoplasm. It carries out the reaction ATP + H2O + cellular proteinSide 1 = ADP + phosphate + cellular proteinSide 2.. Functionally, part of the Sec protein translocase complex. Interacts with the SecYEG preprotein conducting channel. Has a central role in coupling the hydrolysis of ATP to the transfer of proteins into and across the cell membrane, serving as an ATP-driven molecular motor driving the stepwise translocation of polypeptide chains across the membrane. In terms of biological role, probably participates in protein translocation into and across both the cytoplasmic and thylakoid membranes in cyanobacterial cells. The polypeptide is Protein translocase subunit SecA (Synechococcus sp. (strain WH7803)).